Reading from the N-terminus, the 400-residue chain is Phosphoribosylamine--glycine ligase (400 aa).

The 205-residue stretch at 99–303 folds into the ATP-grasp domain; sequence KRFMKKYGIR…FVNAVLEGYR (205 aa). Residue 125–186 participates in ATP binding; the sequence is IKKFSPPYVI…DEFLAGNELS (62 aa). Positions 273 and 275 each coordinate Mg(2+).

This sequence belongs to the GARS family. Mg(2+) is required as a cofactor. The cofactor is Mn(2+).

It catalyses the reaction 5-phospho-beta-D-ribosylamine + glycine + ATP = N(1)-(5-phospho-beta-D-ribosyl)glycinamide + ADP + phosphate + H(+). Its pathway is purine metabolism; IMP biosynthesis via de novo pathway; N(1)-(5-phospho-D-ribosyl)glycinamide from 5-phospho-alpha-D-ribose 1-diphosphate: step 2/2. The protein is Phosphoribosylamine--glycine ligase of Thermotoga maritima (strain ATCC 43589 / DSM 3109 / JCM 10099 / NBRC 100826 / MSB8).